We begin with the raw amino-acid sequence, 347 residues long: NADH-quinone oxidoreductase subunit H (347 aa).

A run of 9 helical transmembrane segments spans residues 13–33 (LIIA…VAYL), 50–70 (PNVV…KFVF), 82–102 (GVFL…WAVI), 115–135 (VGIL…IMGG), 161–181 (IGFV…TDIV), 198–218 (FLDW…ISAL), 248–268 (FLLF…LMTV), 286–306 (VPGI…FAMV), and 325–345 (VFLP…KVFG).

The protein belongs to the complex I subunit 1 family. As to quaternary structure, NDH-1 is composed of 14 different subunits. Subunits NuoA, H, J, K, L, M, N constitute the membrane sector of the complex.

It localises to the cell inner membrane. It carries out the reaction a quinone + NADH + 5 H(+)(in) = a quinol + NAD(+) + 4 H(+)(out). In terms of biological role, NDH-1 shuttles electrons from NADH, via FMN and iron-sulfur (Fe-S) centers, to quinones in the respiratory chain. The immediate electron acceptor for the enzyme in this species is believed to be ubiquinone. Couples the redox reaction to proton translocation (for every two electrons transferred, four hydrogen ions are translocated across the cytoplasmic membrane), and thus conserves the redox energy in a proton gradient. This subunit may bind ubiquinone. This Brucella ovis (strain ATCC 25840 / 63/290 / NCTC 10512) protein is NADH-quinone oxidoreductase subunit H.